The chain runs to 271 residues: Bifunctional protein FolD (271 aa).

NADP(+) contacts are provided by residues 154–156 (GRS), T181, and I222.

It belongs to the tetrahydrofolate dehydrogenase/cyclohydrolase family. In terms of assembly, homodimer.

The catalysed reaction is (6R)-5,10-methylene-5,6,7,8-tetrahydrofolate + NADP(+) = (6R)-5,10-methenyltetrahydrofolate + NADPH. The enzyme catalyses (6R)-5,10-methenyltetrahydrofolate + H2O = (6R)-10-formyltetrahydrofolate + H(+). Its pathway is one-carbon metabolism; tetrahydrofolate interconversion. In terms of biological role, catalyzes the oxidation of 5,10-methylenetetrahydrofolate to 5,10-methenyltetrahydrofolate and then the hydrolysis of 5,10-methenyltetrahydrofolate to 10-formyltetrahydrofolate. This Thermosipho africanus (strain TCF52B) protein is Bifunctional protein FolD.